We begin with the raw amino-acid sequence, 138 residues long: DNA-directed RNA polymerase subunit omega (138 aa).

The protein belongs to the RNA polymerase subunit omega family. In terms of assembly, the RNAP catalytic core consists of 2 alpha, 1 beta, 1 beta' and 1 omega subunit. When a sigma factor is associated with the core the holoenzyme is formed, which can initiate transcription.

It catalyses the reaction RNA(n) + a ribonucleoside 5'-triphosphate = RNA(n+1) + diphosphate. Functionally, promotes RNA polymerase assembly. Latches the N- and C-terminal regions of the beta' subunit thereby facilitating its interaction with the beta and alpha subunits. This chain is DNA-directed RNA polymerase subunit omega, found in Thermodesulfovibrio yellowstonii (strain ATCC 51303 / DSM 11347 / YP87).